The primary structure comprises 43 residues: Cytochrome b559 subunit beta (43 aa).

A helical membrane pass occupies residues 18 to 34; it reads WLAIHGLAIPTVFFLGG. Residue His22 coordinates heme.

The protein belongs to the PsbE/PsbF family. As to quaternary structure, heterodimer of an alpha subunit and a beta subunit. PSII is composed of 1 copy each of membrane proteins PsbA, PsbB, PsbC, PsbD, PsbE, PsbF, PsbH, PsbI, PsbJ, PsbK, PsbL, PsbM, PsbT, PsbX, PsbY, PsbZ, Psb30/Ycf12, at least 3 peripheral proteins of the oxygen-evolving complex and a large number of cofactors. It forms dimeric complexes. Requires heme b as cofactor.

Its subcellular location is the plastid. The protein localises to the chloroplast thylakoid membrane. Its function is as follows. This b-type cytochrome is tightly associated with the reaction center of photosystem II (PSII). PSII is a light-driven water:plastoquinone oxidoreductase that uses light energy to abstract electrons from H(2)O, generating O(2) and a proton gradient subsequently used for ATP formation. It consists of a core antenna complex that captures photons, and an electron transfer chain that converts photonic excitation into a charge separation. The protein is Cytochrome b559 subunit beta of Phaeodactylum tricornutum (strain CCAP 1055/1).